A 286-amino-acid chain; its full sequence is ATP synthase gamma chain (286 aa).

This sequence belongs to the ATPase gamma chain family. As to quaternary structure, F-type ATPases have 2 components, CF(1) - the catalytic core - and CF(0) - the membrane proton channel. CF(1) has five subunits: alpha(3), beta(3), gamma(1), delta(1), epsilon(1). CF(0) has three main subunits: a, b and c.

It localises to the cell inner membrane. Its function is as follows. Produces ATP from ADP in the presence of a proton gradient across the membrane. The gamma chain is believed to be important in regulating ATPase activity and the flow of protons through the CF(0) complex. The polypeptide is ATP synthase gamma chain (Pseudoalteromonas atlantica (strain T6c / ATCC BAA-1087)).